Here is a 508-residue protein sequence, read N- to C-terminus: Light-independent protochlorophyllide reductase subunit B (508 aa).

Residue Asp36 coordinates [4Fe-4S] cluster. Catalysis depends on Asp294, which acts as the Proton donor. 429–430 (GM) is a binding site for substrate.

The protein belongs to the ChlB/BchB/BchZ family. Protochlorophyllide reductase is composed of three subunits; ChlL, ChlN and ChlB. Forms a heterotetramer of two ChlB and two ChlN subunits. [4Fe-4S] cluster is required as a cofactor.

It catalyses the reaction chlorophyllide a + oxidized 2[4Fe-4S]-[ferredoxin] + 2 ADP + 2 phosphate = protochlorophyllide a + reduced 2[4Fe-4S]-[ferredoxin] + 2 ATP + 2 H2O. It participates in porphyrin-containing compound metabolism; chlorophyll biosynthesis (light-independent). Component of the dark-operative protochlorophyllide reductase (DPOR) that uses Mg-ATP and reduced ferredoxin to reduce ring D of protochlorophyllide (Pchlide) to form chlorophyllide a (Chlide). This reaction is light-independent. The NB-protein (ChlN-ChlB) is the catalytic component of the complex. The protein is Light-independent protochlorophyllide reductase subunit B of Synechocystis sp. (strain ATCC 27184 / PCC 6803 / Kazusa).